Consider the following 62-residue polypeptide: uncharacterized protein (62 aa).

This is an uncharacterized protein from His1 virus (isolate Australia/Victoria) (His1V).